Reading from the N-terminus, the 152-residue chain is UPF0266 membrane protein YobD (152 aa).

The next 3 helical transmembrane spans lie at 6-26, 45-65, and 67-87; these read LVLI…QFIM, VDSV…VTSH, and AQMT…IFWI.

This sequence belongs to the UPF0266 family.

The protein resides in the cell inner membrane. The sequence is that of UPF0266 membrane protein YobD from Salmonella agona (strain SL483).